Here is a 218-residue protein sequence, read N- to C-terminus: Histone chaperone ASF1B (218 aa).

It belongs to the ASF1 family. As to quaternary structure, interacts with histone H3 and histone H4. Interacts strongly with the N-terminus of TOUSLED. Post-translationally, phosphorylated in vitro by TOUSLED.

It localises to the nucleus. In terms of biological role, histone chaperone that facilitates histone deposition and histone exchange and removal during nucleosome assembly and disassembly. The chain is Histone chaperone ASF1B (ASF1B) from Arabidopsis thaliana (Mouse-ear cress).